A 432-amino-acid chain; its full sequence is Glutamyl-tRNA reductase (432 aa).

Substrate contacts are provided by residues 49 to 52 (TCNR), Ser101, 106 to 108 (EPQ), and Gln112. The active-site Nucleophile is Cys50. 181 to 186 (GAGETI) contributes to the NADP(+) binding site. The interval 407–432 (FPEKPGYQHPPIATPIVRTDDADPAP) is disordered.

This sequence belongs to the glutamyl-tRNA reductase family. In terms of assembly, homodimer.

It catalyses the reaction (S)-4-amino-5-oxopentanoate + tRNA(Glu) + NADP(+) = L-glutamyl-tRNA(Glu) + NADPH + H(+). The protein operates within porphyrin-containing compound metabolism; protoporphyrin-IX biosynthesis; 5-aminolevulinate from L-glutamyl-tRNA(Glu): step 1/2. Catalyzes the NADPH-dependent reduction of glutamyl-tRNA(Glu) to glutamate 1-semialdehyde (GSA). The sequence is that of Glutamyl-tRNA reductase from Xanthomonas oryzae pv. oryzae (strain MAFF 311018).